Consider the following 302-residue polypeptide: Troponin T, cardiac muscle isoforms (302 aa).

The span at 1–55 shows a compositional bias: acidic residues; that stretch reads MSDSEEVVEEYEQEQEEEYVEEEEEEWLEEDDGQEDQVDEEEEETEETTAEEQED. Disordered regions lie at residues 1-99, 138-230, and 280-302; these read MSDS…GERL, KDRI…RKPL, and SDHQ…GRWK. N-acetylserine is present on S2. A Phosphoserine; by CK2 modification is found at S2. Residues 65 to 79 show a composition bias toward basic and acidic residues; the sequence is EGDREQEPGEGESKP. Positions 82–93 are enriched in pro residues; sequence KPFMPNLVPPKI. Composition is skewed to basic and acidic residues over residues 138–186 and 204–230; these read KDRI…EKEA and KSEK…RKPL.

The protein belongs to the troponin T family.

Functionally, troponin T is the tropomyosin-binding subunit of troponin, the thin filament regulatory complex which confers calcium-sensitivity to striated muscle actomyosin ATPase activity. This Gallus gallus (Chicken) protein is Troponin T, cardiac muscle isoforms (TNNT2).